Reading from the N-terminus, the 103-residue chain is Small ribosomal subunit protein uS10 (103 aa).

Belongs to the universal ribosomal protein uS10 family. Part of the 30S ribosomal subunit.

Functionally, involved in the binding of tRNA to the ribosomes. This chain is Small ribosomal subunit protein uS10, found in Buchnera aphidicola subsp. Acyrthosiphon pisum (strain 5A).